The sequence spans 806 residues: Leucine--tRNA ligase (806 aa).

Positions 40–51 (PYPSGQGLHVGH) match the 'HIGH' region motif. The 'KMSKS' region signature appears at 578 to 582 (KMSKS). An ATP-binding site is contributed by K581.

It belongs to the class-I aminoacyl-tRNA synthetase family.

The protein localises to the cytoplasm. The catalysed reaction is tRNA(Leu) + L-leucine + ATP = L-leucyl-tRNA(Leu) + AMP + diphosphate. This is Leucine--tRNA ligase from Limosilactobacillus reuteri (strain DSM 20016) (Lactobacillus reuteri).